The primary structure comprises 59 residues: Large ribosomal subunit protein uL30 (59 aa).

The protein belongs to the universal ribosomal protein uL30 family. In terms of assembly, part of the 50S ribosomal subunit.

The sequence is that of Large ribosomal subunit protein uL30 from Enterococcus faecalis (strain ATCC 700802 / V583).